The sequence spans 271 residues: Elongation factor Ts (271 aa).

Residues 76–79 form an involved in Mg(2+) ion dislocation from EF-Tu region; the sequence is TDFV.

Belongs to the EF-Ts family.

It localises to the cytoplasm. Functionally, associates with the EF-Tu.GDP complex and induces the exchange of GDP to GTP. It remains bound to the aminoacyl-tRNA.EF-Tu.GTP complex up to the GTP hydrolysis stage on the ribosome. The polypeptide is Elongation factor Ts (Mycobacterium tuberculosis (strain ATCC 25177 / H37Ra)).